The chain runs to 237 residues: Demethylmenaquinone methyltransferase (237 aa).

S-adenosyl-L-methionine is bound by residues Thr-58, Asp-79, and 106-107 (NA).

This sequence belongs to the class I-like SAM-binding methyltransferase superfamily. MenG/UbiE family.

The enzyme catalyses a 2-demethylmenaquinol + S-adenosyl-L-methionine = a menaquinol + S-adenosyl-L-homocysteine + H(+). It functions in the pathway quinol/quinone metabolism; menaquinone biosynthesis; menaquinol from 1,4-dihydroxy-2-naphthoate: step 2/2. Methyltransferase required for the conversion of demethylmenaquinol (DMKH2) to menaquinol (MKH2). In Listeria monocytogenes serotype 4a (strain HCC23), this protein is Demethylmenaquinone methyltransferase.